A 232-amino-acid polypeptide reads, in one-letter code: Orotidine 5'-phosphate decarboxylase (232 aa).

Residues D13, K35, 62–71 (DLKFHDIPNT), T122, R182, Q191, G211, and R212 each bind substrate. The active-site Proton donor is the K64.

It belongs to the OMP decarboxylase family. Type 1 subfamily. Homodimer.

It catalyses the reaction orotidine 5'-phosphate + H(+) = UMP + CO2. The protein operates within pyrimidine metabolism; UMP biosynthesis via de novo pathway; UMP from orotate: step 2/2. Functionally, catalyzes the decarboxylation of orotidine 5'-monophosphate (OMP) to uridine 5'-monophosphate (UMP). This chain is Orotidine 5'-phosphate decarboxylase, found in Pseudomonas fluorescens (strain SBW25).